The following is a 345-amino-acid chain: Prenyltransferase ltmC (345 aa).

His-112 is a substrate binding site. Mg(2+)-binding residues include Asp-119 and Asp-123. A substrate-binding site is contributed by Arg-128. Asn-130 carries an N-linked (GlcNAc...) asparagine glycan. 5 residues coordinate substrate: Lys-212, Thr-213, Gln-243, Asn-250, and Lys-260.

It belongs to the FPP/GGPP synthase family. Mg(2+) serves as cofactor.

Its pathway is secondary metabolite biosynthesis. Prenyltransferase; part of the gene cluster that mediates the biosynthesis of lolitrems, indole-diterpene mycotoxins that are potent tremorgens in mammals, and are synthesized by clavicipitaceous fungal endophytes in association with their grass hosts. The geranylgeranyl diphosphate (GGPP) synthase ltmG is proposed to catalyze the first step in lolitrem biosynthesis. LtmG catalyzes a series of iterative condensations of isopentenyl diphosphate (IPP) with dimethylallyl diphosphate (DMAPP), geranyl diphosphate (GPP), and farnesyl diphosphate (FPP), to form GGPP. GGPP then condenses with indole-3-glycerol phosphate to form 3-geranylgeranylindole, an acyclic intermediate, to be incorporated into paxilline. Either ltmG or ltmC could be responsible for this step, as both are putative prenyl transferases. The FAD-dependent monooxygenase ltmM then catalyzes the epoxidation of the two terminal alkenes of the geranylgeranyl moiety, which is subsequently cyclized by ltmB, to paspaline. The cytochrome P450 monooxygenases ltmQ and ltmP can sequentially oxidize paspaline to terpendole E and terpendole F. Alternatively, ltmP converts paspaline to an intermediate which is oxidized by ltmQ to terpendole F. LtmF, ltmK, ltmE and ltmJ appear to be unique to the epichloe endophytes. The prenyltransferase ltmF is involved in the 27-hydroxyl-O-prenylation. The cytochrome P450 monooxygenase ltmK is required for the oxidative acetal ring formation. The multi-functional prenyltransferase ltmE is required for C20- and C21-prenylations of the indole ring of paspalanes and acts together with the cytochrome P450 monooxygenase ltmJ to yield lolitremanes by multiple oxidations and ring closures. The stereoisomer pairs of lolitriol and lolitrem N or lolitrem B and lolitrem F may be attributed to variations in the way in which ring closure can occur under the action of ltmJ. While the major product of this pathway is lolitrem B, the prenyl transferases and cytochrome P450 monooxygenases identified in this pathway have a remarkable versatility in their regio- and stereo-specificities to generate a diverse range of metabolites that are products of a metabolic grid rather than a linear pathway. This is Prenyltransferase ltmC from Epichloe festucae var. lolii (Neotyphodium lolii).